The following is a 282-amino-acid chain: Nicotianamine synthase-like 5 protein (282 aa).

Belongs to the nicotianamine synthase (NAS)-like family.

The sequence is that of Nicotianamine synthase-like 5 protein (NAS5) from Hordeum vulgare (Barley).